The chain runs to 305 residues: 2-oxoacid:ferredoxin oxidoreductase subunit beta (305 aa).

[4Fe-4S] cluster contacts are provided by Cys12, Cys15, and Cys46. Thiamine diphosphate-binding positions include Ile44–Ser47 and His65. Position 90 (Asp90) interacts with Mg(2+). Gly91 to Asp92 provides a ligand contact to thiamine diphosphate. Residues Asn118 and Val120 each coordinate Mg(2+). A thiamine diphosphate-binding site is contributed by Gly122 to Leu123. Residue Cys197 coordinates [4Fe-4S] cluster.

Heterodimer composed of an alpha and a beta subunit. The cofactor is [4Fe-4S] cluster. It depends on thiamine diphosphate as a cofactor. Mg(2+) is required as a cofactor.

The catalysed reaction is a 2-oxocarboxylate + 2 oxidized [2Fe-2S]-[ferredoxin] + CoA = an acyl-CoA + 2 reduced [2Fe-2S]-[ferredoxin] + CO2 + H(+). In terms of biological role, catalyzes the coenzyme A-dependent oxidative decarboxylation of different 2-oxoacids such as 2-oxoglutarate, pyruvate and 2-oxobutyrate to form their CoA derivatives. The sequence is that of 2-oxoacid:ferredoxin oxidoreductase subunit beta from Saccharolobus solfataricus (Sulfolobus solfataricus).